A 189-amino-acid chain; its full sequence is NADH dehydrogenase [ubiquinone] 1 beta subcomplex subunit 5, mitochondrial (189 aa).

Residues 1-46 (MAAMSLLQRASVSALTALSCRRAGPRLGVGSFLTRSFPKTVAPVRH) constitute a mitochondrion transit peptide. Residues 73–93 (FYLMLTGIPVIIGITLVNIFI) traverse the membrane as a helical segment.

This sequence belongs to the complex I NDUFB5 subunit family. In terms of assembly, complex I is composed of 45 different subunits.

Its subcellular location is the mitochondrion inner membrane. Its function is as follows. Accessory subunit of the mitochondrial membrane respiratory chain NADH dehydrogenase (Complex I), that is believed not to be involved in catalysis. Complex I functions in the transfer of electrons from NADH to the respiratory chain. The immediate electron acceptor for the enzyme is believed to be ubiquinone. This Mus musculus (Mouse) protein is NADH dehydrogenase [ubiquinone] 1 beta subcomplex subunit 5, mitochondrial (Ndufb5).